A 1461-amino-acid chain; its full sequence is Formin-3 (1461 aa).

2 disordered regions span residues 1 to 67 (MASK…SDDN) and 431 to 457 (YREE…RPTT). A compositionally biased stretch (low complexity) spans 12–28 (TSRSIQSRNSSYSTSSN). 2 stretches are compositionally biased toward polar residues: residues 29–53 (ERIG…STND) and 438–457 (PHGN…RPTT). One can recognise a GBD/FH3 domain in the interval 92–508 (SETEQLRKIY…KIQKSMQLLT (417 aa)). The interval 137-515 (QHTVLDEATY…LLTHTLEALE (379 aa)) is interaction with tea4. Positions 540-639 (GTAEEIAEYK…VQNSNEQHLQ (100 aa)) form a coiled coil. Residues 683–811 (GIPVRVHTPS…EPKIDETSLT (129 aa)) are disordered. Positions 700 to 718 (SFSGSEISSSPSPLLPDVS) are enriched in low complexity. Positions 731 to 784 (SPPPPPPAVIVPTPAPAPIPVPPPAPIMGGPPPPPPPPGVAGAGPPPPPPPPPA) are enriched in pro residues. Positions 801 to 811 (PEPKIDETSLT) are enriched in basic and acidic residues. An FH2 domain is found at 845-1257 (LRDLHKPTRP…RIMSEDRDKL (413 aa)). Disordered stretches follow at residues 1268-1337 (AKYR…AEEK) and 1416-1461 (ERLQ…RQKQ). 2 stretches are compositionally biased toward basic and acidic residues: residues 1273 to 1315 (KREL…KTGD) and 1325 to 1337 (MEDL…AEEK). Residues 1445 to 1454 (TNGSNASNLV) are compositionally biased toward polar residues.

The protein belongs to the formin homology family. Interacts with rax2, rho3 and tea4. Interacts with tea1 in the presence of tea4.

Its subcellular location is the cytoplasm. It is found in the cell cortex. The protein localises to the cell tip. Its function is as follows. Involved in controlling polarized cell growth. Required for interphase actin cable formation and microtubule organization. The sequence is that of Formin-3 (for3) from Schizosaccharomyces pombe (strain 972 / ATCC 24843) (Fission yeast).